We begin with the raw amino-acid sequence, 98 residues long: Large ribosomal subunit protein uL23 (98 aa).

It belongs to the universal ribosomal protein uL23 family. As to quaternary structure, part of the 50S ribosomal subunit. Contacts protein L29, and trigger factor when it is bound to the ribosome.

Functionally, one of the early assembly proteins it binds 23S rRNA. One of the proteins that surrounds the polypeptide exit tunnel on the outside of the ribosome. Forms the main docking site for trigger factor binding to the ribosome. This is Large ribosomal subunit protein uL23 from Dinoroseobacter shibae (strain DSM 16493 / NCIMB 14021 / DFL 12).